The primary structure comprises 249 residues: Anamorsin homolog (249 aa).

An N-terminal SAM-like domain region spans residues 1–130; that stretch reads MEQFKDLQKS…ETGSAARLSF (130 aa). Positions 131 to 161 are linker; the sequence is AKKAAGVNVWKISGDDEELIDEEDLLDEADK. Cys172, Cys181, Cys184, and Cys186 together coordinate [2Fe-2S] cluster. Residues 172-186 are fe-S binding site A; that stretch reads CSTTGKRKACKNCSC. Residues Cys210, Cys213, Cys221, and Cys224 each coordinate [4Fe-4S] cluster. 2 consecutive short sequence motifs (cx2C motif) follow at residues 210–213 and 221–224; these read CGNC and CSTC. Residues 210 to 224 are fe-S binding site B; the sequence is CGNCYLGDAFRCSTC.

This sequence belongs to the anamorsin family. As to quaternary structure, monomer. It depends on [2Fe-2S] cluster as a cofactor. Requires [4Fe-4S] cluster as cofactor.

The protein localises to the cytoplasm. It is found in the mitochondrion intermembrane space. Its function is as follows. Component of the cytosolic iron-sulfur (Fe-S) protein assembly (CIA) machinery. Required for the maturation of extramitochondrial Fe-S proteins. Part of an electron transfer chain functioning in an early step of cytosolic Fe-S biogenesis, facilitating the de novo assembly of a [4Fe-4S] cluster on the cytosolic Fe-S scaffold complex. Electrons are transferred from NADPH via a FAD- and FMN-containing diflavin oxidoreductase. Together with the diflavin oxidoreductase, also required for the assembly of the diferric tyrosyl radical cofactor of ribonucleotide reductase (RNR), probably by providing electrons for reduction during radical cofactor maturation in the catalytic small subunit. The polypeptide is Anamorsin homolog (Drosophila grimshawi (Hawaiian fruit fly)).